A 451-amino-acid polypeptide reads, in one-letter code: Trigger factor (451 aa).

The region spanning 165–250 (DDKLTIDFEG…LHQIQAREAL (86 aa)) is the PPIase FKBP-type domain.

This sequence belongs to the FKBP-type PPIase family. Tig subfamily.

It localises to the cytoplasm. It catalyses the reaction [protein]-peptidylproline (omega=180) = [protein]-peptidylproline (omega=0). Its function is as follows. Involved in protein export. Acts as a chaperone by maintaining the newly synthesized protein in an open conformation. Functions as a peptidyl-prolyl cis-trans isomerase. The sequence is that of Trigger factor from Helicobacter pylori (strain HPAG1).